We begin with the raw amino-acid sequence, 393 residues long: Cysteine protease ATG4B (393 aa).

Cys-73 (nucleophile) is an active-site residue. Active-site residues include Asp-278 and His-280. The LIR motif lies at 388 to 391 (FEIL).

This sequence belongs to the peptidase C54 family.

The protein localises to the cytoplasm. It is found in the cytosol. The protein resides in the cytoplasmic vesicle. It localises to the autophagosome. Its subcellular location is the endoplasmic reticulum. The protein localises to the mitochondrion. The catalysed reaction is [protein]-C-terminal L-amino acid-glycyl-phosphatidylethanolamide + H2O = [protein]-C-terminal L-amino acid-glycine + a 1,2-diacyl-sn-glycero-3-phosphoethanolamine. It catalyses the reaction [protein]-C-terminal L-amino acid-glycyl-phosphatidylserine + H2O = [protein]-C-terminal L-amino acid-glycine + a 1,2-diacyl-sn-glycero-3-phospho-L-serine. Its function is as follows. Cysteine protease that plays a key role in autophagy by mediating both proteolytic activation and delipidation of ATG8 family proteins. Required for canonical autophagy (macroautophagy), non-canonical autophagy as well as for mitophagy. The protease activity is required for proteolytic activation of ATG8 family proteins: cleaves the C-terminal amino acid of ATG8 proteins to reveal a C-terminal glycine. Exposure of the glycine at the C-terminus is essential for ATG8 proteins conjugation to phosphatidylethanolamine (PE) and insertion to membranes, which is necessary for autophagy. Protease activity is also required to counteract formation of high-molecular weight conjugates of ATG8 proteins (ATG8ylation): acts as a deubiquitinating-like enzyme that removes ATG8 conjugated to other proteins, such as ATG3. In addition to the protease activity, also mediates delipidation of ATG8 family proteins. Catalyzes delipidation of PE-conjugated forms of ATG8 proteins during macroautophagy. Also involved in non-canonical autophagy, a parallel pathway involving conjugation of ATG8 proteins to single membranes at endolysosomal compartments, by catalyzing delipidation of ATG8 proteins conjugated to phosphatidylserine (PS). In Gallus gallus (Chicken), this protein is Cysteine protease ATG4B.